Consider the following 345-residue polypeptide: N-acetyl-gamma-glutamyl-phosphate reductase (345 aa).

Residue Cys149 is part of the active site.

Belongs to the NAGSA dehydrogenase family. Type 1 subfamily.

The protein localises to the cytoplasm. It carries out the reaction N-acetyl-L-glutamate 5-semialdehyde + phosphate + NADP(+) = N-acetyl-L-glutamyl 5-phosphate + NADPH + H(+). The protein operates within amino-acid biosynthesis; L-arginine biosynthesis; N(2)-acetyl-L-ornithine from L-glutamate: step 3/4. Catalyzes the NADPH-dependent reduction of N-acetyl-5-glutamyl phosphate to yield N-acetyl-L-glutamate 5-semialdehyde. The protein is N-acetyl-gamma-glutamyl-phosphate reductase of Geobacillus sp. (strain WCH70).